Reading from the N-terminus, the 113-residue chain is Iron-sulfur cluster insertion protein ErpA (113 aa).

Iron-sulfur cluster is bound by residues Cys-41, Cys-105, and Cys-107.

The protein belongs to the HesB/IscA family. As to quaternary structure, homodimer. Requires iron-sulfur cluster as cofactor.

Its function is as follows. Required for insertion of 4Fe-4S clusters for at least IspG. This chain is Iron-sulfur cluster insertion protein ErpA, found in Mannheimia succiniciproducens (strain KCTC 0769BP / MBEL55E).